We begin with the raw amino-acid sequence, 227 residues long: PKHD-type hydroxylase Bxeno_B2756 (227 aa).

The Fe2OG dioxygenase domain occupies 80–179 (QVYPPLFNRY…RVASFFWVQS (100 aa)). Fe cation is bound by residues His-98, Asp-100, and His-160. Arg-170 contacts 2-oxoglutarate.

It depends on Fe(2+) as a cofactor. L-ascorbate serves as cofactor.

The sequence is that of PKHD-type hydroxylase Bxeno_B2756 from Paraburkholderia xenovorans (strain LB400).